A 501-amino-acid polypeptide reads, in one-letter code: Phase 2 flagellin (501 aa).

This sequence belongs to the bacterial flagellin family.

The protein localises to the secreted. It localises to the bacterial flagellum. In terms of biological role, flagellin is the subunit protein which polymerizes to form the filaments of bacterial flagella. This chain is Phase 2 flagellin (fljB), found in Salmonella abortus-equi.